Consider the following 389-residue polypeptide: PqqA peptide cyclase (389 aa).

Residues 19-234 enclose the Radical SAM core domain; it reads VGLPLWLLAE…TNEYRARLEA (216 aa). Residues cysteine 33, cysteine 37, and cysteine 40 each coordinate [4Fe-4S] cluster.

The protein belongs to the radical SAM superfamily. PqqE family. In terms of assembly, interacts with PqqD. The interaction is necessary for activity of PqqE. Requires [4Fe-4S] cluster as cofactor.

The enzyme catalyses [PQQ precursor protein] + S-adenosyl-L-methionine = E-Y cross-linked-[PQQ precursor protein] + 5'-deoxyadenosine + L-methionine + H(+). It participates in cofactor biosynthesis; pyrroloquinoline quinone biosynthesis. Catalyzes the cross-linking of a glutamate residue and a tyrosine residue in the PqqA protein as part of the biosynthesis of pyrroloquinoline quinone (PQQ). In Pseudomonas syringae pv. syringae (strain B728a), this protein is PqqA peptide cyclase.